The following is a 310-amino-acid chain: Methionyl-tRNA formyltransferase (310 aa).

109-112 (SLLP) contributes to the (6S)-5,6,7,8-tetrahydrofolate binding site.

It belongs to the Fmt family.

The enzyme catalyses L-methionyl-tRNA(fMet) + (6R)-10-formyltetrahydrofolate = N-formyl-L-methionyl-tRNA(fMet) + (6S)-5,6,7,8-tetrahydrofolate + H(+). Functionally, attaches a formyl group to the free amino group of methionyl-tRNA(fMet). The formyl group appears to play a dual role in the initiator identity of N-formylmethionyl-tRNA by promoting its recognition by IF2 and preventing the misappropriation of this tRNA by the elongation apparatus. The chain is Methionyl-tRNA formyltransferase from Pseudomonas putida (strain GB-1).